The primary structure comprises 345 residues: Low-density lipoprotein receptor class A domain-containing protein 3 (345 aa).

The signal sequence occupies residues 1–17 (MWLLGPLCLLLSSAAES). Topologically, residues 18–173 (QLLPGNNFTN…NQLVYYPSIT (156 aa)) are extracellular. The N-linked (GlcNAc...) asparagine glycan is linked to Asn24. LDL-receptor class A domains lie at 28-65 (ECNIPGNFMCSNGRCIPGAWQCDGLPDCFDKSDEKECP), 70-107 (KCGPTFFPCASGIHCIIGRFRCNGFEDCPDGSDEENCT), and 112-148 (LCSTARYHCKNGLCIDKSFICDGQNNCQDNSDEESCE). 9 disulfide bridges follow: Cys29–Cys42, Cys37–Cys55, Cys49–Cys64, Cys71–Cys84, Cys78–Cys97, Cys91–Cys106, Cys113–Cys125, Cys120–Cys138, and Cys132–Cys147. The interval 30 to 57 (NIPGNFMCSNGRCIPGAWQCDGLPDCFD) is (Microbial infection) Interaction with Venezuelan equine encephalitis virus/VEEV spike proteins E1 and E2. A helical transmembrane segment spans residues 174–194 (YAIIGSSVIFVLVVALLALVL). Residues 195–345 (HHQRKRNNLM…SEPSQGTEEV (151 aa)) are Cytoplasmic-facing. 2 short sequence motifs (involved in ITCH interaction) span residues 256–259 (PPSY) and 275–278 (PPPY). Residues 270–345 (WYDLPPPPYS…SEPSQGTEEV (76 aa)) are disordered. Low complexity predominate over residues 295–313 (SRSGSANSASSQAASSLLS).

Belongs to the LDLR family. Interacts with APP precursor C-terminus. Interacts directly with ITCH; this interaction promotes ITCH auto-ubiquitination leading to its degradation. Interacts directly with NEDD4; this interaction promotes NEDD4 auto-ubiquitination. Interacts directly with NEDD4L. In terms of assembly, (Microbial infection) Interacts (via domain LDL-receptor class A 1) with Venezuelan equine encephalitis virus/VEEV spike proteins E1 and E2. In terms of tissue distribution, expressed at high levels in brain, lung, skeletal muscle, and pancreas. Expressed at moderate levels in heart, placenta, and kidney but not detected in the liver.

The protein localises to the cell membrane. In terms of biological role, may influence APP processing, resulting in a decrease in sAPP-alpha production and increased amyloidogenic P3 peptide production. May regulate ITCH and NEDD4 E3 ligase activity and degradation. Its function is as follows. (Microbial infection) Acts as a receptor for Venezuelan equine encephalitis virus. In Homo sapiens (Human), this protein is Low-density lipoprotein receptor class A domain-containing protein 3.